We begin with the raw amino-acid sequence, 868 residues long: Leucine--tRNA ligase (868 aa).

The short motif at 42–52 (PYPSGKLHMGH) is the 'HIGH' region element. A 'KMSKS' region motif is present at residues 627-631 (KMAKS). An ATP-binding site is contributed by lysine 630.

Belongs to the class-I aminoacyl-tRNA synthetase family.

It is found in the cytoplasm. It carries out the reaction tRNA(Leu) + L-leucine + ATP = L-leucyl-tRNA(Leu) + AMP + diphosphate. This is Leucine--tRNA ligase from Pseudomonas fluorescens (strain Pf0-1).